The primary structure comprises 1175 residues: DNA ligase 3 (1175 aa).

Residues 195–243 are disordered; it reads HDFDNDNGDGDDGDGDDNDDDDGDGDSDSDKKKKKSSGGSGSDSGSKKK. Positions 199 to 221 are enriched in acidic residues; the sequence is NDNGDGDDGDGDDNDDDDGDGDS. Residue Glu-281 coordinates ATP. Lys-283 functions as the N6-AMP-lysine intermediate in the catalytic mechanism. ATP-binding residues include Arg-288 and Arg-303. Mg(2+)-binding residues include Glu-334 and Glu-432. ATP contacts are provided by Lys-437, Arg-448, and Lys-452. Disordered stretches follow at residues 612-669 and 829-869; these read PVGK…LKFV and KSSP…KRGR. Low complexity-rich tracts occupy residues 622 to 635 and 829 to 859; these read TTTTTTTTTTTTTT and KSSPTTTSPTTTSPTTTSPKITSPSSSSSPS. Residues 883 to 976 enclose the BRCT 1 domain; sequence PSLPIFEDVN…KLLPLHEDYI (94 aa). Residues 984 to 1036 are disordered; the sequence is PDYSQSSSSSSMSIEEEKIVVTTTSDDPSEGNQQQQDKKVIKESKIIQSKDHS. Low complexity predominate over residues 987–996; it reads SQSSSSSSMS. Polar residues predominate over residues 1004–1018; it reads VTTTSDDPSEGNQQQ. Basic and acidic residues predominate over residues 1019–1036; the sequence is QDKKVIKESKIIQSKDHS. Positions 1067–1174 constitute a BRCT 2 domain; it reads HLLSIFQECI…DLLDVKNYKL (108 aa).

This sequence belongs to the ATP-dependent DNA ligase family. It depends on Mg(2+) as a cofactor.

Its subcellular location is the nucleus. The catalysed reaction is ATP + (deoxyribonucleotide)n-3'-hydroxyl + 5'-phospho-(deoxyribonucleotide)m = (deoxyribonucleotide)n+m + AMP + diphosphate.. Its function is as follows. The alpha isoform interacts with DNA-repair protein XRCC1 and can correct defective DNA strand-break repair and sister chromatid exchange following treatment with ionizing radiation and alkylating agents. The beta isoform does not interact with XRCC1 and may be specifically involved in the completion of homologous recombination events that occur during meiotic prophase. The sequence is that of DNA ligase 3 (lig3) from Dictyostelium discoideum (Social amoeba).